A 467-amino-acid polypeptide reads, in one-letter code: F-box/kelch-repeat protein SKIP11 (467 aa).

The segment at 77 to 117 (LSGGEEQADAAIGDGSSSRQEQEQQSDFNDNGGDSSDSHSL) is disordered. Positions 92-111 (SSSRQEQEQQSDFNDNGGDS) are enriched in low complexity. Residues 116-163 (SLINEIGRDNSIDCLIRCSRSDYGSIASLNRNFRSLVKSGEIYRLRRQ) enclose the F-box domain. Kelch repeat units follow at residues 159–210 (RLRR…KESL), 215–259 (DLLV…SLGE), 261–307 (AIFA…FMDG), 308–356 (KFYV…DMSP), and 365–411 (AVVN…GLAF).

As to quaternary structure, part of a SCF (ASK-cullin-F-box) protein ligase complex. Interacts with SKP1A/ASK1 and SPK1B/ASK2.

It is found in the nucleus. Its pathway is protein modification; protein ubiquitination. Its function is as follows. Component of SCF(ASK-cullin-F-box) E3 ubiquitin ligase complexes, which may mediate the ubiquitination and subsequent proteasomal degradation of target proteins. The polypeptide is F-box/kelch-repeat protein SKIP11 (SKIP11) (Arabidopsis thaliana (Mouse-ear cress)).